The chain runs to 230 residues: Cytidylate kinase (230 aa).

12–20 (GPSGAGKGT) is an ATP binding site.

It belongs to the cytidylate kinase family. Type 1 subfamily.

It localises to the cytoplasm. It carries out the reaction CMP + ATP = CDP + ADP. The catalysed reaction is dCMP + ATP = dCDP + ADP. This Shewanella sp. (strain W3-18-1) protein is Cytidylate kinase.